The primary structure comprises 300 residues: Pantothenate synthetase (300 aa).

Position 30–37 (30–37 (MGYLHEGH)) interacts with ATP. The active-site Proton donor is His37. Gln61 contributes to the (R)-pantoate binding site. A beta-alanine-binding site is contributed by Gln61. Residue 147-150 (GMKD) participates in ATP binding. Gln153 provides a ligand contact to (R)-pantoate. ATP-binding positions include Val176 and 184-187 (KSSR).

It belongs to the pantothenate synthetase family. As to quaternary structure, homodimer.

Its subcellular location is the cytoplasm. It carries out the reaction (R)-pantoate + beta-alanine + ATP = (R)-pantothenate + AMP + diphosphate + H(+). It participates in cofactor biosynthesis; (R)-pantothenate biosynthesis; (R)-pantothenate from (R)-pantoate and beta-alanine: step 1/1. Functionally, catalyzes the condensation of pantoate with beta-alanine in an ATP-dependent reaction via a pantoyl-adenylate intermediate. This is Pantothenate synthetase from Geobacillus kaustophilus (strain HTA426).